We begin with the raw amino-acid sequence, 341 residues long: Phosphate acyltransferase (341 aa).

This sequence belongs to the PlsX family. As to quaternary structure, homodimer. Probably interacts with PlsY.

Its subcellular location is the cytoplasm. It catalyses the reaction a fatty acyl-[ACP] + phosphate = an acyl phosphate + holo-[ACP]. It participates in lipid metabolism; phospholipid metabolism. Its function is as follows. Catalyzes the reversible formation of acyl-phosphate (acyl-PO(4)) from acyl-[acyl-carrier-protein] (acyl-ACP). This enzyme utilizes acyl-ACP as fatty acyl donor, but not acyl-CoA. This is Phosphate acyltransferase from Aliivibrio fischeri (strain ATCC 700601 / ES114) (Vibrio fischeri).